The primary structure comprises 489 residues: MEDVVKALAKEVLSSADIEWNPPPGLLRRESSRYAGFTKTGSLAVVSSKARARRPDRTRVKYLRDEGFDRLVVDAWDYVVKASFYAVERCVGSGDRRFRILALVEKSYPHLALMSHLNFFPCGSTGSYDMVTIDVPSYSDVWMLVERRSNSTLVLGSDYYGELKMSFLRLAMNEARDRHLGVGLHAASKLYRVRVEGSMREVGVLVFGLSGTGKTTLTVEDHGLREPEYVRVMQDDIVILDWRGVAHGTEMNLYPKTDSVPELKKLEPAVLHPDAVLENVVVKSDGTPDFTDLSLTRNARALAIREAIPIASGSVDLMGTNVLVFLTRRPEMPPLARLTSPYQAVAYFMLGESFRTSAEAGKPEPVRVPGFDPFMLEPKWRSAYSLLDLIKSLNMNVYVMNTGHAKDRKIPPELSKHLLLSLVKENVDWKLDKHMGFEIAVRAGGVNLDGYNPEELYGESYVRVVDLLRRDRQEFLRSIPSVSFLADYV.

2 residues coordinate substrate: Arg-53 and Tyr-159. Residues His-185, 208–216 (GLSGTGKTT), Asp-258, Arg-300, 409–410 (KI), and Ser-415 contribute to the ATP site. Position 300 (Arg-300) interacts with substrate.

Belongs to the phosphoenolpyruvate carboxykinase (ATP) family.

It is found in the cytoplasm. The enzyme catalyses oxaloacetate + ATP = phosphoenolpyruvate + ADP + CO2. It functions in the pathway carbohydrate biosynthesis; gluconeogenesis. Its function is as follows. Involved in the gluconeogenesis. Catalyzes the conversion of oxaloacetate (OAA) to phosphoenolpyruvate (PEP) through direct phosphoryl transfer between the nucleoside triphosphate and OAA. The chain is Phosphoenolpyruvate carboxykinase (ATP) from Aeropyrum pernix (strain ATCC 700893 / DSM 11879 / JCM 9820 / NBRC 100138 / K1).